The following is an 89-amino-acid chain: Small ribosomal subunit protein uS15 (89 aa).

This sequence belongs to the universal ribosomal protein uS15 family. Part of the 30S ribosomal subunit. Forms a bridge to the 50S subunit in the 70S ribosome, contacting the 23S rRNA.

Its function is as follows. One of the primary rRNA binding proteins, it binds directly to 16S rRNA where it helps nucleate assembly of the platform of the 30S subunit by binding and bridging several RNA helices of the 16S rRNA. In terms of biological role, forms an intersubunit bridge (bridge B4) with the 23S rRNA of the 50S subunit in the ribosome. In Acidithiobacillus ferrooxidans (strain ATCC 23270 / DSM 14882 / CIP 104768 / NCIMB 8455) (Ferrobacillus ferrooxidans (strain ATCC 23270)), this protein is Small ribosomal subunit protein uS15.